The chain runs to 557 residues: Hepatocyte nuclear factor 1-beta (557 aa).

The interval 1–31 (MVSKLTSLQQELLSALLSSGVTKEVLVQALE) is dimerization. Positions 1 to 32 (MVSKLTSLQQELLSALLSSGVTKEVLVQALEE) constitute an HNF-p1 domain. Phosphoserine is present on residues serine 49, serine 52, serine 75, and serine 80. The segment at 64–85 (TLTNGHAKGRLSGDEGSEDGDD) is disordered. One can recognise a POU-specific atypical domain in the interval 93 to 188 (KELQALNTEE…ILRQFNQTVQ (96 aa)). The segment at residues 231-311 (MRRNRFKWGP…NRRKEEAFRQ (81 aa)) is a DNA-binding region (homeobox; HNF1-type). The interval 324–370 (HSLNPLLSHGSPHHQPSSSPPNKLSGVRYSQQGNNEVTSSSTISHHG) is disordered. Residues 328–344 (PLLSHGSPHHQPSSSPP) are compositionally biased toward low complexity. Residues 351–370 (RYSQQGNNEVTSSSTISHHG) show a composition bias toward polar residues.

This sequence belongs to the HNF1 homeobox family. In terms of assembly, binds DNA as a dimer. Can form homodimer or heterodimer with HNF1-alpha. Interacts (via HNF-p1 domain) with PCBD1; the interaction increases its transactivation activity.

It is found in the nucleus. Its function is as follows. Transcription factor that binds to the inverted palindrome 5'-GTTAATNATTAAC-3'. Binds to the FPC element in the cAMP regulatory unit of the PLAU gene. Transcriptional activity is increased by coactivator PCBD1. The chain is Hepatocyte nuclear factor 1-beta (HNF1B) from Pongo abelii (Sumatran orangutan).